The chain runs to 271 residues: Cobalt import ATP-binding protein CbiO (271 aa).

The 235-residue stretch at 2–236 (LATSDLWFRY…TEAMEHAGLT (235 aa)) folds into the ABC transporter domain. An ATP-binding site is contributed by 34–41 (GANGCGKS).

The protein belongs to the ABC transporter superfamily. Cobalt importer (TC 3.A.1.18.1) family. In terms of assembly, forms an energy-coupling factor (ECF) transporter complex composed of an ATP-binding protein (A component, CbiO), a transmembrane protein (T component, CbiQ) and 2 possible substrate-capture proteins (S components, CbiM and CbiN) of unknown stoichimetry.

Its subcellular location is the cell inner membrane. It participates in cofactor biosynthesis; adenosylcobalamin biosynthesis. Part of the energy-coupling factor (ECF) transporter complex CbiMNOQ involved in cobalt import. Presumably responsible for energy coupling to the transport system. The chain is Cobalt import ATP-binding protein CbiO from Salmonella paratyphi A (strain ATCC 9150 / SARB42).